The primary structure comprises 949 residues: Translation initiation factor IF-2 (949 aa).

Disordered stretches follow at residues 50–206 and 220–359; these read FTEK…GAAR and QNAE…TERK. Basic and acidic residues-rich tracts occupy residues 52–84 and 104–143; these read EKPK…KVEK and FKAE…DQGS. Composition is skewed to polar residues over residues 144-154 and 164-180; these read KNRNFNKSQGQ and GSQQ…SNKP. Residues 187–206 are compositionally biased toward low complexity; that stretch reads NAANRNQNNSQQERQVGAAR. Residues 224–275 are compositionally biased toward basic and acidic residues; that stretch reads YMRHKETQLREQEEARRLAERAKEEARLAAQKAAEEKAKEAEKAAKTERFEP. Residues 319 to 336 are compositionally biased toward low complexity; the sequence is KSWNNQNQVRNQRNSNWN. Positions 450–619 constitute a tr-type G domain; sequence ERAPVVTIMG…LLVAEVEELK (170 aa). Positions 459–466 are G1; that stretch reads GHVDHGKT. Residue 459–466 participates in GTP binding; it reads GHVDHGKT. Residues 484 to 488 form a G2 region; sequence GITQH. Residues 505-508 are G3; that stretch reads DTPG. GTP contacts are provided by residues 505–509 and 559–562; these read DTPGH and NKID. Residues 559–562 are G4; the sequence is NKID. The segment at 595–597 is G5; sequence SAK.

Belongs to the TRAFAC class translation factor GTPase superfamily. Classic translation factor GTPase family. IF-2 subfamily.

It is found in the cytoplasm. Its function is as follows. One of the essential components for the initiation of protein synthesis. Protects formylmethionyl-tRNA from spontaneous hydrolysis and promotes its binding to the 30S ribosomal subunits. Also involved in the hydrolysis of GTP during the formation of the 70S ribosomal complex. The sequence is that of Translation initiation factor IF-2 from Streptococcus uberis (strain ATCC BAA-854 / 0140J).